Reading from the N-terminus, the 579-residue chain is Arginine--tRNA ligase (579 aa).

Positions 127–137 match the 'HIGH' region motif; sequence PNLAKEMHVGH.

Belongs to the class-I aminoacyl-tRNA synthetase family. In terms of assembly, monomer.

Its subcellular location is the cytoplasm. It carries out the reaction tRNA(Arg) + L-arginine + ATP = L-arginyl-tRNA(Arg) + AMP + diphosphate. This chain is Arginine--tRNA ligase, found in Azotobacter vinelandii (strain DJ / ATCC BAA-1303).